The primary structure comprises 214 residues: Pyridoxine/pyridoxamine 5'-phosphate oxidase (214 aa).

Residues 8–11 (RINY) and Lys-66 contribute to the substrate site. Residues 61–66 (RIVLIK), 76–77 (FT), Arg-82, Lys-83, and Gln-105 each bind FMN. Substrate is bound by residues Tyr-123, Arg-127, and Ser-131. Residues 140–141 (QS) and Trp-184 contribute to the FMN site. Substrate is bound at residue 190–192 (RLH). Arg-194 provides a ligand contact to FMN.

It belongs to the pyridoxamine 5'-phosphate oxidase family. As to quaternary structure, homodimer. FMN serves as cofactor.

The enzyme catalyses pyridoxamine 5'-phosphate + O2 + H2O = pyridoxal 5'-phosphate + H2O2 + NH4(+). It catalyses the reaction pyridoxine 5'-phosphate + O2 = pyridoxal 5'-phosphate + H2O2. The protein operates within cofactor metabolism; pyridoxal 5'-phosphate salvage; pyridoxal 5'-phosphate from pyridoxamine 5'-phosphate: step 1/1. It participates in cofactor metabolism; pyridoxal 5'-phosphate salvage; pyridoxal 5'-phosphate from pyridoxine 5'-phosphate: step 1/1. Catalyzes the oxidation of either pyridoxine 5'-phosphate (PNP) or pyridoxamine 5'-phosphate (PMP) into pyridoxal 5'-phosphate (PLP). The polypeptide is Pyridoxine/pyridoxamine 5'-phosphate oxidase (Burkholderia orbicola (strain MC0-3)).